Here is a 92-residue protein sequence, read N- to C-terminus: Translation initiation factor IF-1 (92 aa).

An S1-like domain is found at 1 to 72 (MAKEELIQFE…EKGRLIFRHK (72 aa)). The segment at 69–92 (FRHKDERPGGPPRSGPPRGQFRRR) is disordered.

This sequence belongs to the IF-1 family. As to quaternary structure, component of the 30S ribosomal translation pre-initiation complex which assembles on the 30S ribosome in the order IF-2 and IF-3, IF-1 and N-formylmethionyl-tRNA(fMet); mRNA recruitment can occur at any time during PIC assembly.

It localises to the cytoplasm. One of the essential components for the initiation of protein synthesis. Stabilizes the binding of IF-2 and IF-3 on the 30S subunit to which N-formylmethionyl-tRNA(fMet) subsequently binds. Helps modulate mRNA selection, yielding the 30S pre-initiation complex (PIC). Upon addition of the 50S ribosomal subunit IF-1, IF-2 and IF-3 are released leaving the mature 70S translation initiation complex. This is Translation initiation factor IF-1 from Rhodopseudomonas palustris (strain ATCC BAA-98 / CGA009).